Consider the following 233-residue polypeptide: LexA repressor (233 aa).

Positions 26–46 (FDEMKEALDLRSKSGIHRLIT) form a DNA-binding region, H-T-H motif. Active-site for autocatalytic cleavage activity residues include S154 and K192.

Belongs to the peptidase S24 family. As to quaternary structure, homodimer.

The catalysed reaction is Hydrolysis of Ala-|-Gly bond in repressor LexA.. In terms of biological role, represses a number of genes involved in the response to DNA damage (SOS response), including recA and lexA. In the presence of single-stranded DNA, RecA interacts with LexA causing an autocatalytic cleavage which disrupts the DNA-binding part of LexA, leading to derepression of the SOS regulon and eventually DNA repair. The protein is LexA repressor of Roseobacter denitrificans (strain ATCC 33942 / OCh 114) (Erythrobacter sp. (strain OCh 114)).